The sequence spans 639 residues: Tetracycline resistance protein TetW (639 aa).

In terms of domain architecture, tr-type G spans 1 to 243; sequence MKIINIGILA…VTGLFQPIGE (243 aa). Residues 10–17, 74–78, and 128–131 contribute to the GTP site; these read AHVDAGKT, DTPGH, and NKID.

The protein belongs to the TRAFAC class translation factor GTPase superfamily. Classic translation factor GTPase family. TetM/TetO subfamily.

In terms of biological role, abolishes the inhibitory effect of tetracyclin on protein synthesis by a non-covalent modification of the ribosomes. The protein is Tetracycline resistance protein TetW (tetW) of Butyrivibrio fibrisolvens.